Consider the following 734-residue polypeptide: Monosaccharide-sensing protein 1 (734 aa).

Transmembrane regions (helical) follow at residues 6–26 (LVAL…ATIA), 44–64 (GLVV…SGPI), 79–99 (VMYF…VLCF), 102–122 (LLNG…ISET), 133–153 (TLPQ…VFTM), and 163–183 (AMLG…VFYL). A disordered region spans residues 351–403 (YNKDNDDYATDDGAGDDDDSDNDLRSPLMSRQTTSMDKDMIPHPTSGSTLSMR). A compositionally biased stretch (acidic residues) spans 357–371 (DYATDDGAGDDDDSD). Phosphoserine occurs at positions 446 and 480. 6 consecutive transmembrane segments (helical) span residues 510–530 (ALVV…NGVL), 556–576 (ASFL…VVAM), 588–608 (LLWT…SELI), 621–641 (GCVV…PNIL), 653–673 (LCIA…TYSL), and 680–700 (IGLV…WIFV).

The protein belongs to the major facilitator superfamily. Sugar transporter (TC 2.A.1.1) family. Binds to VIK at the tonoplast. Post-translationally, phosphorylated by VIK; this activation promotes carrier activity. As to expression, mostly expressed in juvenile and adult leaves, to a lower extent, in flower tissues, and, at low levels, in roots and stems.

It is found in the vacuole membrane. The enzyme catalyses D-glucose(out) + H(+)(in) = D-glucose(in) + H(+)(out). The catalysed reaction is sucrose(out) + H(+)(in) = sucrose(in) + H(+)(out). Enhanced activation by VIK-mediated phosphorylation promoting carrier activity and consequently vacuolar sugar accumulation. In terms of biological role, sugar proton-coupled antiporter which contributes to vacuolar sugar import (e.g. monosaccharides including glucose, sucrose and fructose), particularly during stress responses (e.g. in response to cold). Required for cytosolic glucose homeostasis. The sequence is that of Monosaccharide-sensing protein 1 from Arabidopsis thaliana (Mouse-ear cress).